A 130-amino-acid polypeptide reads, in one-letter code: Glycine cleavage system H protein (130 aa).

The region spanning 24 to 106 (SVTVGITEHA…YGDGWIMRIQ (83 aa)) is the Lipoyl-binding domain. Lys65 carries the post-translational modification N6-lipoyllysine.

The protein belongs to the GcvH family. The glycine cleavage system is composed of four proteins: P, T, L and H. The cofactor is (R)-lipoate.

In terms of biological role, the glycine cleavage system catalyzes the degradation of glycine. The H protein shuttles the methylamine group of glycine from the P protein to the T protein. This chain is Glycine cleavage system H protein, found in Halorhodospira halophila (strain DSM 244 / SL1) (Ectothiorhodospira halophila (strain DSM 244 / SL1)).